The sequence spans 370 residues: Alanine racemase (370 aa).

Catalysis depends on Lys36, which acts as the Proton acceptor; specific for D-alanine. Lys36 is modified (N6-(pyridoxal phosphate)lysine). Arg134 is a substrate binding site. Tyr265 serves as the catalytic Proton acceptor; specific for L-alanine. Met313 lines the substrate pocket.

This sequence belongs to the alanine racemase family. Requires pyridoxal 5'-phosphate as cofactor.

It carries out the reaction L-alanine = D-alanine. It participates in amino-acid biosynthesis; D-alanine biosynthesis; D-alanine from L-alanine: step 1/1. Catalyzes the interconversion of L-alanine and D-alanine. May also act on other amino acids. The protein is Alanine racemase (alr) of Desulforamulus reducens (strain ATCC BAA-1160 / DSM 100696 / MI-1) (Desulfotomaculum reducens).